We begin with the raw amino-acid sequence, 310 residues long: NADH-cytochrome b5 reductase 1 (310 aa).

A helical transmembrane segment spans residues 30 to 50 (WVPFAVALAAGFVAWKLSVGG). The region spanning 61-166 (NEFQNFVLKE…RGPKGAMVYT (106 aa)) is the FAD-binding FR-type domain. Residues 146 to 160 (TTLK…RGPK) and 172 to 209 (HIGM…QVDL) each bind FAD.

Belongs to the flavoprotein pyridine nucleotide cytochrome reductase family. Monomer. Component of the 2-(3-amino-3-carboxypropyl)histidine synthase complex composed of dph1, dph2, dph3 and a NADH-dependent reductase, predominantly cbr1. Requires FAD as cofactor.

The protein localises to the mitochondrion outer membrane. It carries out the reaction 2 Fe(III)-[cytochrome b5] + NADH = 2 Fe(II)-[cytochrome b5] + NAD(+) + H(+). The catalysed reaction is 2 Fe(3+)-[Dph3] + NADH = 2 Fe(2+)-[Dph3] + NAD(+) + H(+). The protein operates within protein modification; peptidyl-diphthamide biosynthesis. NADH-dependent reductase for dph3 and cytochrome b5. Required for the first step of diphthamide biosynthesis, a post-translational modification of histidine which occurs in elongation factor 2. Dph1 and dph2 transfer a 3-amino-3-carboxypropyl (ACP) group from S-adenosyl-L-methionine (SAM) to a histidine residue, the reaction is assisted by a reduction system comprising dph3 and a NADH-dependent reductase, predominantly cbr1. By reducing dph3, also involved in the formation of the tRNA wobble base modification mcm5s 2U (5-methoxycarbonylmethyl-2-thiouridine), mediated by the elongator complex. The cytochrome b5/NADH cytochrome b5 reductase electron transfer system supports the catalytic activity of several sterol biosynthetic enzymes. The protein is NADH-cytochrome b5 reductase 1 (cbr1) of Emericella nidulans (strain FGSC A4 / ATCC 38163 / CBS 112.46 / NRRL 194 / M139) (Aspergillus nidulans).